The following is a 59-amino-acid chain: Large ribosomal subunit protein bL32 (59 aa).

Residues 35-59 (EAHLRHHISPNGYYRGRKVVKTKND) are disordered. The segment covering 49-59 (RGRKVVKTKND) has biased composition (basic residues).

Belongs to the bacterial ribosomal protein bL32 family.

In Polynucleobacter asymbioticus (strain DSM 18221 / CIP 109841 / QLW-P1DMWA-1) (Polynucleobacter necessarius subsp. asymbioticus), this protein is Large ribosomal subunit protein bL32.